A 158-amino-acid polypeptide reads, in one-letter code: Snaclec flavocetin-A subunit alpha (158 aa).

The N-terminal stretch at 1–23 is a signal peptide; that stretch reads MERLIFVSFGLLVVILSLSGTGA. Disulfide bonds link C27–C38, C55–C152, and C127–C144. Residues 34 to 153 form the C-type lectin domain; sequence YDRYCYQAFS…CGTENPFVCK (120 aa).

It belongs to the snaclec family. In terms of assembly, tetramer of heterodimers of alpha and beta subunits (alphabeta)(4); disulfide-linked. In terms of tissue distribution, expressed by the venom gland.

The protein resides in the secreted. Its function is as follows. Strong platelet aggregation inhibitor. Binds specifically to platelet glycoprotein Ibalpha (GP1BA) with high affinity and inhibits vWF-dependent platelet aggregation. Has also been observed to induce small agglutinates in washed platelets by binding to GPIb. This is Snaclec flavocetin-A subunit alpha from Protobothrops flavoviridis (Habu).